Reading from the N-terminus, the 158-residue chain is Ecotin (158 aa).

The first 21 residues, 1–21 (MRLLPLASVTLLSVLCAQAFA), serve as a signal peptide directing secretion. C67 and C104 are oxidised to a cystine.

Belongs to the protease inhibitor I11 (ecotin) family. In terms of assembly, homodimer.

Its subcellular location is the periplasm. Its function is as follows. General inhibitor of family S1 serine proteases. This is Ecotin from Pseudomonas fluorescens (strain ATCC BAA-477 / NRRL B-23932 / Pf-5).